Reading from the N-terminus, the 152-residue chain is Ribosome maturation factor RimP (152 aa).

This sequence belongs to the RimP family.

The protein resides in the cytoplasm. In terms of biological role, required for maturation of 30S ribosomal subunits. This chain is Ribosome maturation factor RimP, found in Alteromonas mediterranea (strain DSM 17117 / CIP 110805 / LMG 28347 / Deep ecotype).